A 215-amino-acid polypeptide reads, in one-letter code: MSSTEEKFSLKEVLVSFKACLIDDDKDVILEHYVNGWKGLVRFMSSLGTIFSFVSKDAVSKIQIMESYLAGPNGERYRTLQSMVEYELSSDLVDLTKRSDHTDSGCRTLLRLHRALRWLQLFLEKLRVSNEDSKTSTLCTEAYNDSLANFHPWIVRKAATVSFIALPYRNTFFEIMNVGTTEEVVAMLGESMPYVTKVYDFTQEVYSQHNLLELP.

Residues D57, K61, R107, R111, and H151 each coordinate an N-acylsphingoid base 1-phosphate.

Belongs to the GLTP family.

The protein localises to the cytoplasm. The protein resides in the cytosol. It is found in the golgi apparatus. Its subcellular location is the trans-Golgi network membrane. It localises to the cell membrane. The protein localises to the endosome membrane. The protein resides in the nucleus outer membrane. The catalysed reaction is N-(hexadecanoyl)-sphing-4-enine-1-phosphate(in) = N-(hexadecanoyl)-sphing-4-enine-1-phosphate(out). It carries out the reaction N-(9Z-octadecenoyl)-sphing-4-enine-1-phosphate(in) = N-(9Z-octadecenoyl)-sphing-4-enine-1-phosphate(out). In terms of biological role, mediates the intracellular transfer of ceramide-1-phosphate (C1P) between organelle membranes and the cell membrane. Required for normal structure of the Golgi stacks. Can bind phosphoceramides with a variety of aliphatic chains, but has a preference for lipids with saturated C16:0 or monounsaturated C18:1 aliphatic chains, and is inefficient with phosphoceramides containing lignoceryl (C24:0). Plays a role in the regulation of the cellular levels of ceramide-1-phosphate, and thereby contributes to the regulation of phospholipase PLA2G4A activity and the release of arachidonic acid. Has no activity with galactosylceramide, lactosylceramide, sphingomyelin, phosphatidylcholine, phosphatidic acid and ceramide. C1P transfer is stimulated by phosphatidylserine in C1P source vesicles. Regulates autophagy and pyroptosis, but not apoptosis. This chain is Ceramide-1-phosphate transfer protein (cptp), found in Xenopus laevis (African clawed frog).